A 105-amino-acid chain; its full sequence is Putative membrane protein insertion efficiency factor (105 aa).

A disordered region spans residues 68–105 (FHPGGLDPVPPRRNESGTEISDARPGSDGEASPGAPGL). Residues 77–94 (PPRRNESGTEISDARPGS) are compositionally biased toward basic and acidic residues.

The protein belongs to the UPF0161 family.

The protein localises to the cell membrane. Functionally, could be involved in insertion of integral membrane proteins into the membrane. This chain is Putative membrane protein insertion efficiency factor, found in Thermobifida fusca (strain YX).